A 241-amino-acid polypeptide reads, in one-letter code: Xyloglucan-specific endo-beta-1,4-glucanase 1 (241 aa).

Positions 1-19 are cleaved as a signal peptide; sequence MKGLLAGTIAAATFAVASA. Residue glutamate 136 is part of the active site. N-linked (GlcNAc...) asparagine glycans are attached at residues asparagine 174 and asparagine 190. Residue glutamate 222 is part of the active site.

It belongs to the glycosyl hydrolase 12 (cellulase H) family. As to quaternary structure, interacts with host apoplastic glucanase inhibitor GIP2.

The catalysed reaction is xyloglucan + H2O = xyloglucan oligosaccharides.. With respect to regulation, the xyloglucanase activity is inhibited by the binding of the host apoplastic glucanase inhibitor GIP2. Functionally, glycoside hydrolase that exhibits xyloglucanase activity. Acts as an important virulence factor during P.parasitica infection of its host Nicotiana benthamiana. Also acts as a pathogen-associated molecular pattern (PAMP) in host species, where it can trigger defense responses including cell death. The PAMP activity is independent of its xyloglucanase activity. With paralog XLP1, is required to elevate apoplastic sugar during P.parasitica infection. This Phytophthora nicotianae (strain INRA-310) (Phytophthora parasitica) protein is Xyloglucan-specific endo-beta-1,4-glucanase 1.